A 287-amino-acid chain; its full sequence is 4-diphosphocytidyl-2-C-methyl-D-erythritol kinase (287 aa).

Lys-12 is a catalytic residue. Position 94–104 (94–104 (PAQAGMGGGSS)) interacts with ATP. The active site involves Asp-136.

This sequence belongs to the GHMP kinase family. IspE subfamily.

It carries out the reaction 4-CDP-2-C-methyl-D-erythritol + ATP = 4-CDP-2-C-methyl-D-erythritol 2-phosphate + ADP + H(+). Its pathway is isoprenoid biosynthesis; isopentenyl diphosphate biosynthesis via DXP pathway; isopentenyl diphosphate from 1-deoxy-D-xylulose 5-phosphate: step 3/6. Functionally, catalyzes the phosphorylation of the position 2 hydroxy group of 4-diphosphocytidyl-2C-methyl-D-erythritol. This chain is 4-diphosphocytidyl-2-C-methyl-D-erythritol kinase, found in Albidiferax ferrireducens (strain ATCC BAA-621 / DSM 15236 / T118) (Rhodoferax ferrireducens).